We begin with the raw amino-acid sequence, 85 residues long: Sec-independent protein translocase protein TatA (85 aa).

Residues 1–21 (MAGLQGWQLVIIILLAILLFA) traverse the membrane as a helical segment. Positions 43-85 (VKQMRTEGKDAKDERSGTGSTAADEPVEGRVVDRDETDPRDQR) are disordered. Composition is skewed to basic and acidic residues over residues 44 to 58 (KQMR…DERS) and 69 to 85 (VEGR…RDQR).

Belongs to the TatA/E family. As to quaternary structure, the Tat system comprises two distinct complexes: a TatABC complex, containing multiple copies of TatA, TatB and TatC subunits, and a separate TatA complex, containing only TatA subunits. Substrates initially bind to the TatABC complex, which probably triggers association of the separate TatA complex to form the active translocon.

The protein localises to the cell membrane. Its function is as follows. Part of the twin-arginine translocation (Tat) system that transports large folded proteins containing a characteristic twin-arginine motif in their signal peptide across membranes. TatA could form the protein-conducting channel of the Tat system. The polypeptide is Sec-independent protein translocase protein TatA (Micrococcus luteus (strain ATCC 4698 / DSM 20030 / JCM 1464 / CCM 169 / CCUG 5858 / IAM 1056 / NBRC 3333 / NCIMB 9278 / NCTC 2665 / VKM Ac-2230) (Micrococcus lysodeikticus)).